A 101-amino-acid polypeptide reads, in one-letter code: MVSLSHYLVLGALLFAIGVVGIFLNRKNVIILLMSIELMLLAVNMNFVAFSHFLQDTAGQIFVFFILTVAAAEAAIGLAILVALFRNLRTINVDDLDELKG.

Transmembrane regions (helical) follow at residues 4 to 24 (LSHY…GIFL), 30 to 50 (IILL…FVAF), and 61 to 81 (IFVF…LAIL).

It belongs to the complex I subunit 4L family. NDH-1 is composed of 14 different subunits. Subunits NuoA, H, J, K, L, M, N constitute the membrane sector of the complex.

The protein localises to the cell inner membrane. The enzyme catalyses a quinone + NADH + 5 H(+)(in) = a quinol + NAD(+) + 4 H(+)(out). NDH-1 shuttles electrons from NADH, via FMN and iron-sulfur (Fe-S) centers, to quinones in the respiratory chain. The immediate electron acceptor for the enzyme in this species is believed to be ubiquinone. Couples the redox reaction to proton translocation (for every two electrons transferred, four hydrogen ions are translocated across the cytoplasmic membrane), and thus conserves the redox energy in a proton gradient. This chain is NADH-quinone oxidoreductase subunit K, found in Nitrosomonas europaea (strain ATCC 19718 / CIP 103999 / KCTC 2705 / NBRC 14298).